The chain runs to 163 residues: Leptin (163 aa).

The first 18 residues, 1–18 (MCWRPLCRLWSYLVYVQA), serve as a signal peptide directing secretion. An intrachain disulfide couples C113 to C163.

The protein belongs to the leptin family. As to expression, not exclusively localized in adipose tissue but is also expressed in liver.

It localises to the secreted. In terms of biological role, key player in the regulation of energy balance and body weight control. Once released into the circulation, has central and peripheral effects by binding LEPR, found in many tissues, which results in the activation of several major signaling pathways. This Gallus gallus (Chicken) protein is Leptin (LEP).